A 541-amino-acid polypeptide reads, in one-letter code: Carboxypeptidase Y homolog A (541 aa).

Positions methionine 1–valine 17 are cleaved as a signal peptide. Positions proline 18–lysine 122 are excised as a propeptide. 5 cysteine pairs are disulfide-bonded: cysteine 177–cysteine 416, cysteine 311–cysteine 325, cysteine 335–cysteine 358, cysteine 342–cysteine 351, and cysteine 380–cysteine 386. N-linked (GlcNAc...) asparagine glycosylation occurs at asparagine 208. Serine 264 is a catalytic residue. Aspartate 455 is a catalytic residue. N-linked (GlcNAc...) asparagine glycosylation is found at asparagine 485, asparagine 491, and asparagine 506. The active site involves histidine 517.

This sequence belongs to the peptidase S10 family.

The protein localises to the vacuole. The catalysed reaction is Release of a C-terminal amino acid with broad specificity.. Functionally, vacuolar carboxypeptidase involved in degradation of small peptides. Digests preferentially peptides containing an aliphatic or hydrophobic residue in P1' position, as well as methionine, leucine or phenylalanine in P1 position of ester substrate. The chain is Carboxypeptidase Y homolog A (cpyA) from Uncinocarpus reesii (strain UAMH 1704).